Reading from the N-terminus, the 158-residue chain is Transcriptional repressor NrdR (158 aa).

Residues 3–34 (CPYCQSEDTQVKDSRPAEDGAVIRRRRVCSVC) fold into a zinc finger. Positions 49-139 (LMVVKKSGRR…VYRNFSKAVD (91 aa)) constitute an ATP-cone domain.

The protein belongs to the NrdR family. Zn(2+) serves as cofactor.

Functionally, negatively regulates transcription of bacterial ribonucleotide reductase nrd genes and operons by binding to NrdR-boxes. The sequence is that of Transcriptional repressor NrdR from Brucella abortus (strain S19).